Reading from the N-terminus, the 3750-residue chain is Cubilin homolog (3750 aa).

Positions 1–28 (MEGAARSRLLLCWTLLAIITDTWPIAEG) are cleaved as a signal peptide. 2 N-linked (GlcNAc...) asparagine glycosylation sites follow: asparagine 51 and asparagine 123. The EGF-like 1 domain occupies 154–190 (EANSCASGPCENGGTCYNTYTGFRCQCRSAFEGTKCE). Cystine bridges form between cysteine 158-cysteine 169, cysteine 163-cysteine 178, cysteine 180-cysteine 189, cysteine 196-cysteine 212, cysteine 206-cysteine 221, and cysteine 223-cysteine 232. An EGF-like 2; calcium-binding domain is found at 192–233 (DVNECALYEGTDLGCQNGGQCQNHFGTYSCLCQPGWHGMHCT). The region spanning 282 to 308 (DVDECSDSAAHKPCSTSCINLPGSFTC) is the EGF-like 3; calcium-binding domain. The EGF-like 4; calcium-binding domain maps to 324 to 352 (DLDECQTNNGGCSLSPKVDCINTYGSYHC). The N-linked (GlcNAc...) asparagine glycan is linked to asparagine 424. 2 consecutive EGF-like domains span residues 426–463 (TTTN…PICE) and 465–503 (QPSP…RLCE). Disulfide bonds link cysteine 430/cysteine 441, cysteine 435/cysteine 451, cysteine 453/cysteine 462, cysteine 469/cysteine 480, cysteine 474/cysteine 491, cysteine 493/cysteine 502, and cysteine 509/cysteine 535. A glycan (N-linked (GlcNAc...) asparagine) is linked at asparagine 448. CUB domains lie at 509 to 623 (CNGM…WNSM), 627 to 738 (CGGR…YSVE), 744 to 852 (CGGV…YRMA), 853 to 971 (CDYK…YRAL), 978 to 1095 (CGGV…YTFE), 1100 to 1212 (CGGH…WRIF), 1216 to 1331 (CGGS…YKAN), 1332 to 1434 (CIRN…QLDY), 1439 to 1550 (CMEE…YRTV), 1554 to 1670 (CGGK…FHES), 1671 to 1788 (CGQT…YMTM), 1792 to 1902 (CGSI…YNYE), and 1903 to 2001 (HHNE…WNRL). 2 N-linked (GlcNAc...) asparagine glycosylation sites follow: asparagine 542 and asparagine 548. A disulfide bridge links cysteine 562 with cysteine 584. Residue asparagine 609 is glycosylated (N-linked (GlcNAc...) asparagine). Disulfide bonds link cysteine 627/cysteine 654, cysteine 681/cysteine 701, cysteine 744/cysteine 770, cysteine 853/cysteine 879, cysteine 913/cysteine 933, and cysteine 978/cysteine 1004. A glycan (N-linked (GlcNAc...) asparagine) is linked at asparagine 871. Ca(2+) is bound by residues glutamate 1026, aspartate 1034, and aspartate 1080. A disulfide bond links cysteine 1031 and cysteine 1058. A disulfide bond links cysteine 1100 and cysteine 1126. An N-linked (GlcNAc...) asparagine glycan is attached at asparagine 1119. Glutamate 1148 serves as a coordination point for Ca(2+). Asparagine 1152 carries an N-linked (GlcNAc...) asparagine glycan. An intrachain disulfide couples cysteine 1153 to cysteine 1175. Aspartate 1156 and aspartate 1197 together coordinate Ca(2+). Cysteine 1216 and cysteine 1242 are joined by a disulfide. Ca(2+) contacts are provided by glutamate 1264, aspartate 1272, and aspartate 1316. An intrachain disulfide couples cysteine 1269 to cysteine 1292. A disulfide bond links cysteine 1332 and cysteine 1360. Residues asparagine 1335, asparagine 1359, asparagine 1413, and asparagine 1424 are each glycosylated (N-linked (GlcNAc...) asparagine). Cysteine 1439 and cysteine 1465 are disulfide-bonded. An N-linked (GlcNAc...) asparagine glycan is attached at asparagine 1491. Disulfide bonds link cysteine 1492/cysteine 1513, cysteine 1554/cysteine 1580, cysteine 1607/cysteine 1631, cysteine 1671/cysteine 1697, cysteine 1733/cysteine 1755, cysteine 1792/cysteine 1818, and cysteine 1845/cysteine 1866. Asparagine 1694 carries N-linked (GlcNAc...) asparagine glycosylation. N-linked (GlcNAc...) asparagine glycosylation is found at asparagine 1908 and asparagine 2009. 2 disulfide bridges follow: cysteine 2019–cysteine 2048 and cysteine 2077–cysteine 2100. CUB domains are found at residues 2019 to 2139 (CGNQ…VRTA), 2140 to 2256 (CGSE…FRFE), 2262 to 2383 (DSGR…LSVA), 2385 to 2512 (CGGS…YTSL), and 2516 to 2646 (CGET…MNEV). N-linked (GlcNAc...) asparagine glycans are attached at residues asparagine 2092, asparagine 2128, asparagine 2152, and asparagine 2231. Cysteines 2140 and 2167 form a disulfide. Cysteines 2324 and 2346 form a disulfide. The N-linked (GlcNAc...) asparagine glycan is linked to asparagine 2377. The cysteines at positions 2385 and 2416 are disulfide-linked. Asparagine 2442 carries N-linked (GlcNAc...) asparagine glycosylation. Intrachain disulfides connect cysteine 2445–cysteine 2474 and cysteine 2516–cysteine 2542. Residues asparagine 2655, asparagine 2671, asparagine 2682, and asparagine 2772 are each glycosylated (N-linked (GlcNAc...) asparagine). 2 cysteine pairs are disulfide-bonded: cysteine 2761/cysteine 2790 and cysteine 2837/cysteine 2859. CUB domains follow at residues 2761–2895 (CGGV…IKYG), 2898–3010 (CGGK…FERN), 3011–3128 (CGGL…YTSR), 3130–3246 (CGGI…VRVM), 3249–3364 (CDEK…INAI), 3368–3512 (CGSS…VALN), 3522–3615 (LQGR…YLAS), and 3623–3736 (CGGQ…FAGV). 2 N-linked (GlcNAc...) asparagine glycosylation sites follow: asparagine 2885 and asparagine 2889. Disulfide bonds link cysteine 2898–cysteine 2921 and cysteine 2949–cysteine 2973. 3 N-linked (GlcNAc...) asparagine glycosylation sites follow: asparagine 2960, asparagine 2965, and asparagine 2982. Cysteines 3011 and 3039 form a disulfide. 2 N-linked (GlcNAc...) asparagine glycosylation sites follow: asparagine 3040 and asparagine 3074. 2 disulfide bridges follow: cysteine 3070–cysteine 3092 and cysteine 3130–cysteine 3157. N-linked (GlcNAc...) asparagine glycosylation occurs at asparagine 3160. Disulfide bonds link cysteine 3184-cysteine 3207, cysteine 3249-cysteine 3278, cysteine 3305-cysteine 3327, and cysteine 3368-cysteine 3402. N-linked (GlcNAc...) asparagine glycosylation occurs at asparagine 3256. An N-linked (GlcNAc...) asparagine glycan is attached at asparagine 3427. Cysteine 3430 and cysteine 3475 are joined by a disulfide. N-linked (GlcNAc...) asparagine glycosylation is found at asparagine 3543, asparagine 3572, and asparagine 3645. Cystine bridges form between cysteine 3560/cysteine 3579, cysteine 3623/cysteine 3649, and cysteine 3676/cysteine 3699.

In terms of tissue distribution, specifically expressed in nephrocytes.

The protein localises to the cell membrane. Functionally, required in the nephrocyte for normal uptake of proteins and elimination of toxins, and for maintenance of endocytic trafficking structures. May function together with Amnionless. In Drosophila melanogaster (Fruit fly), this protein is Cubilin homolog.